Reading from the N-terminus, the 395-residue chain is RNA ligase 1 (395 aa).

Residues tyrosine 48, arginine 65, and lysine 83 each contribute to the ATP site. The N6-AMP-lysine intermediate role is filled by lysine 113. Glutamate 173, lysine 255, and lysine 257 together coordinate ATP. Aspartate 285 contributes to the Mg(2+) binding site.

Mg(2+) serves as cofactor. The cofactor is Mn(2+).

It carries out the reaction ATP + (ribonucleotide)n-3'-hydroxyl + 5'-phospho-(ribonucleotide)m = (ribonucleotide)n+m + AMP + diphosphate.. Its function is as follows. RNA ligase that ligates single-stranded nucleic acids in an ATP-dependent manner. Catalyzes both inter- and intra-molecular single-stranded DNA (ssDNA) ligation to &gt;50% completion in a matter of hours at an elevated temperature, although favoring intra-molecular ligation on RNA and single-stranded DNA substrates. Is able to catalyze the adenylation reaction of ssDNA 3'-terminal phosphate (ssDNA 3'p) to 3'-adenylated DNA (ssDNA 3'pp5'A). Does not have significant 3'-adenylation activity with a 3'-phosphorylated nicked dsDNA substrate. The chain is RNA ligase 1 from Thermus scotoductus.